A 617-amino-acid polypeptide reads, in one-letter code: Chitin elicitor receptor kinase 1 (617 aa).

Residues 1-23 (MKLKISLIAPILLLFSFFFAVES) form the signal peptide. The Extracellular segment spans residues 24-232 (KCRTSCPLAL…KSSKQDGVGA (209 aa)). Disulfide bonds link C25–C93, C29–C155, and C91–C153. Residues N40, N52, and N102 are each glycosylated (N-linked (GlcNAc...) asparagine). The LysM 1; degenerate domain occupies 46 to 74 (VINQNLNSSIAPYDQINFDPILRYNSNIK). In terms of domain architecture, LysM 2; degenerate spans 108 to 140 (RQEDTYERVAISNYANLTTMESLQARNPFPATN). 109–115 (QEDTYER) provides a ligand contact to chitin. N123 is a glycosylation site (N-linked (GlcNAc...) asparagine). Residue 137 to 143 (PATNIPL) participates in chitin binding. A glycan (N-linked (GlcNAc...) asparagine) is linked at N152. Residues 168–211 (VTYPLRPEDSLSSIARSSGVSADILQRYNPGVNFNSGNGIVYVP) form the LysM 3 domain. The chain crosses the membrane as a helical span at residues 233-253 (GVIAGIVIGVIVALLLILFIV). At 254–617 (YYAYRKNKSK…EDLVSLMSGR (364 aa)) the chain is on the cytoplasmic side. Residues S266, S268, and S274 each carry the phosphoserine modification. The 273-residue stretch at 322–594 (FNLSFKIGQG…YIVVALSTLF (273 aa)) folds into the Protein kinase domain. Residues 328–336 (IGQGGFGAV) and K349 contribute to the ATP site. Y390 is subject to Phosphotyrosine. The active-site Proton acceptor is D441. Phosphothreonine occurs at positions 479 and 519.

It belongs to the protein kinase superfamily. Ser/Thr protein kinase family. Forms homodimers and homooligomers. Homodimerization is required to trigger plant defenses. Binds to chitin, chitosan and chito-oligomer oligosaccharide elicitors. Interaction with chitin octamer (NAG(8)) promotes homodimerization while shorter chitin oligomers inhibit homodimerization. Interacts with Pseudomonas syringae hopAB2/avrPtoB. Interacts (preferentially when unphosphorylated) with PBL27 at the plasma membrane. Binds to IOS1. Post-translationally, autophosphorylated. Autophosphorylation is induced by chitin and derivatives. In terms of processing, ubiquitinated and targeted to the proteasome by hopAB2/avrPtoB of Pseudomonas syringae pv. tomato DC3000. Expressed ubiquitously, with lowest expression in pollen.

Its subcellular location is the cell membrane. The enzyme catalyses L-seryl-[protein] + ATP = O-phospho-L-seryl-[protein] + ADP + H(+). It carries out the reaction L-threonyl-[protein] + ATP = O-phospho-L-threonyl-[protein] + ADP + H(+). Its activity is regulated as follows. Activated by chitin-mediated homodimerization. Its function is as follows. Lysin motif (LysM) receptor kinase that functions as a cell surface receptor in chitin elicitor (chitooligosaccharides) signaling leading to innate immunity toward both biotic and abiotic stresses (e.g. tolerance to salinity, heavy-metal stresses, and Botrytis cinerea infection). Recognizes microbe-derived N-acetylglucosamine (NAG)-containing ligands. Involved in the resistance to pathogenic fungi Alternaria brassicicola and Erysiphe cichoracearum, probably by sensing microbe-associated molecular patterns (MAMP) and pathogen-associated molecular patterns (PAMP). Plays an essential role in detecting peptidoglycans (e.g. PGNs) and restricting bacterial growth. Target of the bacterial type III effector E3-ligase protein hopAB2/avrPtoB of Pseudomonas syringae pv. tomato DC3000 that mediates ubiquitination and subsequent proteolysis, thus blocking all defense responses by suppressing PAMP-triggered immunity (PTI). Mediates chitin-induced phosphorylation of PBL27. The protein is Chitin elicitor receptor kinase 1 (CERK1) of Arabidopsis thaliana (Mouse-ear cress).